The chain runs to 126 residues: uncharacterized protein (126 aa).

Residues 5–25 (LIQHITSIFVFSFFFLFFFFS) form a helical membrane-spanning segment.

It is found in the membrane. This is an uncharacterized protein from Saccharomyces cerevisiae (strain ATCC 204508 / S288c) (Baker's yeast).